Here is a 423-residue protein sequence, read N- to C-terminus: MKEIISRHKAGEQIGICSVCSAHPLVIESALRFDLNSGNKVLIEATSNQVNQFGGYTGMKPADFRDFVYGIAQEVGFPRERLILGGDHLGPNCWQNEPAAAAMEKSVELIKAYVVAGFSKIHLDASMSCADDPTPLDPMVVARRAAVLCKAAEETANEEQKCHLTYVIGTEVPVPGGEASTIGSVHVTREVDAARTLETHQIAFRESGLEEALSRVIAIVVQPGVEFDHTQIIHYQPQAAQALSAWIKETPMVYEAHSTDYQTRQAYRALVRDHYAILKVGPALTFALREAIFALAQMENELISPEQRSRVLEVIDEVMLNEPGYWKKYYRPTWSQAMVDIHFSLSDRIRYYWPHPRIRQSVEKLIANLNNVTLPLGLISQFMPVQFERLSEGVLTPTPHNLIIDKIQDVLRAYRFGCTPDVA.

Belongs to the GatZ/KbaZ family. GatZ subfamily. In terms of assembly, forms a complex with GatY.

Its pathway is carbohydrate metabolism; D-tagatose 6-phosphate degradation; D-glyceraldehyde 3-phosphate and glycerone phosphate from D-tagatose 6-phosphate: step 2/2. Component of the tagatose-1,6-bisphosphate aldolase GatYZ that is required for full activity and stability of the Y subunit. Could have a chaperone-like function for the proper and stable folding of GatY. When expressed alone, GatZ does not show any aldolase activity. Is involved in the catabolism of galactitol. The chain is D-tagatose-1,6-bisphosphate aldolase subunit GatZ from Salmonella agona (strain SL483).